The sequence spans 467 residues: Siroheme synthase 2 (467 aa).

A precorrin-2 dehydrogenase /sirohydrochlorin ferrochelatase region spans residues 1-204 (MDYLPIFCQL…NDVALAERQI (204 aa)). NAD(+)-binding positions include 22–23 (EI) and 43–44 (CS). At Ser-128 the chain carries Phosphoserine. The segment at 216 to 467 (GEVVLVGAGP…EPSQPLAQMA (252 aa)) is uroporphyrinogen-III C-methyltransferase. Pro-225 contributes to the S-adenosyl-L-methionine binding site. Residue Asp-248 is the Proton acceptor of the active site. The active-site Proton donor is the Lys-270. S-adenosyl-L-methionine-binding positions include 301-303 (GGD), Ile-306, 331-332 (TA), Met-382, and Gly-411.

In the N-terminal section; belongs to the precorrin-2 dehydrogenase / sirohydrochlorin ferrochelatase family. This sequence in the C-terminal section; belongs to the precorrin methyltransferase family.

It carries out the reaction uroporphyrinogen III + 2 S-adenosyl-L-methionine = precorrin-2 + 2 S-adenosyl-L-homocysteine + H(+). It catalyses the reaction precorrin-2 + NAD(+) = sirohydrochlorin + NADH + 2 H(+). The enzyme catalyses siroheme + 2 H(+) = sirohydrochlorin + Fe(2+). The protein operates within cofactor biosynthesis; adenosylcobalamin biosynthesis; precorrin-2 from uroporphyrinogen III: step 1/1. It participates in cofactor biosynthesis; adenosylcobalamin biosynthesis; sirohydrochlorin from precorrin-2: step 1/1. Its pathway is porphyrin-containing compound metabolism; siroheme biosynthesis; precorrin-2 from uroporphyrinogen III: step 1/1. It functions in the pathway porphyrin-containing compound metabolism; siroheme biosynthesis; siroheme from sirohydrochlorin: step 1/1. The protein operates within porphyrin-containing compound metabolism; siroheme biosynthesis; sirohydrochlorin from precorrin-2: step 1/1. Functionally, multifunctional enzyme that catalyzes the SAM-dependent methylations of uroporphyrinogen III at position C-2 and C-7 to form precorrin-2 via precorrin-1. Then it catalyzes the NAD-dependent ring dehydrogenation of precorrin-2 to yield sirohydrochlorin. Finally, it catalyzes the ferrochelation of sirohydrochlorin to yield siroheme. This Serratia proteamaculans (strain 568) protein is Siroheme synthase 2.